Reading from the N-terminus, the 438-residue chain is Flotillin-2 (438 aa).

It belongs to the band 7/mec-2 family. Flotillin subfamily. Heterooligomeric complex of flotillins 1 and 2.

The protein resides in the membrane. May play a role in axon growth and regeneration. May be involved in epidermal cell adhesion and epidermal structure and function. This chain is Flotillin-2, found in Drosophila melanogaster (Fruit fly).